We begin with the raw amino-acid sequence, 99 residues long: Small ribosomal subunit protein eS24 (99 aa).

The protein belongs to the eukaryotic ribosomal protein eS24 family. In terms of assembly, may be present in 2 copies per 70S ribosome. Part of the 30S ribosomal subunit, where it binds 16S rRNA at its canonical site at the bse of the body, as well as a possible second 50S binding site near 23S rRNA helix 45.

This is Small ribosomal subunit protein eS24 from Pyrococcus furiosus (strain ATCC 43587 / DSM 3638 / JCM 8422 / Vc1).